A 330-amino-acid chain; its full sequence is Beta-ketoacyl-[acyl-carrier-protein] synthase III (330 aa).

Residues C114 and H254 contribute to the active site. Positions 255–259 (QANLR) are ACP-binding. N284 is an active-site residue.

It belongs to the thiolase-like superfamily. FabH family. In terms of assembly, homodimer.

It localises to the cytoplasm. It catalyses the reaction malonyl-[ACP] + acetyl-CoA + H(+) = 3-oxobutanoyl-[ACP] + CO2 + CoA. It functions in the pathway lipid metabolism; fatty acid biosynthesis. In terms of biological role, catalyzes the condensation reaction of fatty acid synthesis by the addition to an acyl acceptor of two carbons from malonyl-ACP. Catalyzes the first condensation reaction which initiates fatty acid synthesis and may therefore play a role in governing the total rate of fatty acid production. Possesses both acetoacetyl-ACP synthase and acetyl transacylase activities. Its substrate specificity determines the biosynthesis of branched-chain and/or straight-chain of fatty acids. The chain is Beta-ketoacyl-[acyl-carrier-protein] synthase III from Roseiflexus castenholzii (strain DSM 13941 / HLO8).